The sequence spans 672 residues: Putative sodium/calcium exchanger 7 (672 aa).

A signal peptide spans 1-23 (MAQPSILFSLTLIFLISIKSCDA). Transmembrane regions (helical) follow at residues 88–108 (VILI…VSSA), 130–150 (VAGV…GSIA), 164–184 (LGEL…TIIL), 196–216 (IRDL…FVFY), 221–241 (LWMP…VIGA), 451–471 (LTLL…QFFL), 479–499 (PGLW…IMVF), 522–542 (IAWI…LGVV), 551–571 (GLTI…VSVV), 581–601 (AAAI…PFTI), 620–640 (LILF…VQKF), and 649–669 (VLIS…TGVL).

The protein belongs to the Ca(2+):cation antiporter (CaCA) (TC 2.A.19) family.

The protein resides in the membrane. This is Putative sodium/calcium exchanger 7 (ncx-7) from Caenorhabditis elegans.